Reading from the N-terminus, the 372-residue chain is GDSL esterase/lipase At1g54020 (372 aa).

Positions 1–26 are cleaved as a signal peptide; it reads MECSSVSVLGILLVFPLLHNLVTISG. Catalysis depends on Ser40, which acts as the Nucleophile. Residues Asn161 and Asn280 are each glycosylated (N-linked (GlcNAc...) asparagine). Residues Asp314 and His317 contribute to the active site.

It belongs to the 'GDSL' lipolytic enzyme family.

The protein localises to the secreted. The polypeptide is GDSL esterase/lipase At1g54020 (Arabidopsis thaliana (Mouse-ear cress)).